We begin with the raw amino-acid sequence, 283 residues long: uncharacterized protein (283 aa).

The first 21 residues, 1 to 21, serve as a signal peptide directing secretion; that stretch reads MKLKLKFLLISLLGSSLLLSA. C22 carries the N-palmitoyl cysteine lipid modification. C22 carries the S-diacylglycerol cysteine lipid modification.

This sequence belongs to the MG439/MG440 family.

Its subcellular location is the cell membrane. This is an uncharacterized protein from Mycoplasma pneumoniae (strain ATCC 29342 / M129 / Subtype 1) (Mycoplasmoides pneumoniae).